The primary structure comprises 81 residues: Sulfur carrier protein TusA (81 aa).

The Cysteine persulfide intermediate role is filled by Cys-19.

Belongs to the sulfur carrier protein TusA family. In terms of assembly, interacts with IscS.

The protein localises to the cytoplasm. Its pathway is tRNA modification. Functionally, sulfur carrier protein involved in sulfur trafficking in the cell. Part of a sulfur-relay system required for 2-thiolation during synthesis of 2-thiouridine of the modified wobble base 5-methylaminomethyl-2-thiouridine (mnm(5)s(2)U) in tRNA. Interacts with IscS and stimulates its cysteine desulfurase activity. Accepts an activated sulfur from IscS, which is then transferred to TusD, and thus determines the direction of sulfur flow from IscS to 2-thiouridine formation. Also appears to be involved in sulfur transfer for the biosynthesis of molybdopterin. This Serratia proteamaculans (strain 568) protein is Sulfur carrier protein TusA.